We begin with the raw amino-acid sequence, 329 residues long: DNA-directed RNA polymerase subunit alpha (329 aa).

The tract at residues 1-235 (MQGSVTEFLK…EQLEAFVDLR (235 aa)) is alpha N-terminal domain (alpha-NTD). Positions 249–329 (FDPILLRPVD…NWPPASIADE (81 aa)) are alpha C-terminal domain (alpha-CTD).

Belongs to the RNA polymerase alpha chain family. In terms of assembly, homodimer. The RNAP catalytic core consists of 2 alpha, 1 beta, 1 beta' and 1 omega subunit. When a sigma factor is associated with the core the holoenzyme is formed, which can initiate transcription.

The enzyme catalyses RNA(n) + a ribonucleoside 5'-triphosphate = RNA(n+1) + diphosphate. Its function is as follows. DNA-dependent RNA polymerase catalyzes the transcription of DNA into RNA using the four ribonucleoside triphosphates as substrates. The sequence is that of DNA-directed RNA polymerase subunit alpha from Enterobacter sp. (strain 638).